Reading from the N-terminus, the 407-residue chain is MAANYGISTAALRSQLMGLINFTGTHKDQADKYRQLLKTVLTNTGQELIDGLRLFVEAIVNEHVSLVISRQILNDVGSELSKLPDDLSKMLSHFTLEKVNPRVISFEEQVAGIRFHLANIYERNQQWRDAATVLVGIPLETGQKQYSVECKLGTYLKIARLYLEDNDSVQAELFINRASLLQAETNSEELQVLYKVCYARVLDYRRKFIEAAQRYNELSYRKIVDQGERMTALKKALICTVLASAGQQRSRMLATLFKDERCQHLPAYGILEKMYLERIIRRSELQEFEALLQDHQKAATSDGSSILDRAVFEHNLLSASKLYNNITFEELGALLDIPAVKAEKIASQMITEGRMNGHIDQISAIVHFENRELLPQWDRQIQSLCYQVNSIIEKISVAEPDWMDNLN.

Residues 204–373 (YRRKFIEAAQ…AIVHFENREL (170 aa)) enclose the PCI domain.

It belongs to the CSN4 family. In terms of assembly, component of the CSN complex, probably composed of CSN1b, alien/CSN2, CSN3, CSN4, CSN5, CSN6, CSN7 and CSN8. Interacts directly with CSN7.

Its subcellular location is the cytoplasm. The protein resides in the nucleus. In terms of biological role, component of the COP9 signalosome complex (CSN), a complex involved in various cellular and developmental processes. The CSN complex is an essential regulator of the ubiquitin (Ubl) conjugation pathway by mediating the deneddylation of the cullin subunits of the SCF-type E3 ligase complexes, leading to decrease the Ubl ligase activity of SCF. The CSN complex plays an essential role in oogenesis and embryogenesis and is required for proper photoreceptor R cell differentiation and promote lamina glial cell migration or axon targeting. It also promotes Ubl-dependent degradation of cyclin E (CycE) during early oogenesis. The chain is COP9 signalosome complex subunit 4 (CSN4) from Drosophila melanogaster (Fruit fly).